A 149-amino-acid polypeptide reads, in one-letter code: Small ribosomal subunit protein uS13 (149 aa).

This sequence belongs to the universal ribosomal protein uS13 family. Part of the 30S ribosomal subunit. Forms a loose heterodimer with protein S19. Forms two bridges to the 50S subunit in the 70S ribosome.

Its function is as follows. Located at the top of the head of the 30S subunit, it contacts several helices of the 16S rRNA. In the 70S ribosome it contacts the 23S rRNA (bridge B1a) and protein L5 of the 50S subunit (bridge B1b), connecting the 2 subunits; these bridges are implicated in subunit movement. The chain is Small ribosomal subunit protein uS13 from Methanococcus maripaludis (strain DSM 14266 / JCM 13030 / NBRC 101832 / S2 / LL).